Consider the following 998-residue polypeptide: Protein Smaug (998 aa).

Residues 1–37 (MKYATGTDNAMTSGISGQTNNSNSASNEMQPTTSTPT) are compositionally biased toward polar residues. 3 disordered regions span residues 1–45 (MKYA…EATS), 50–69 (TATYANGNPNPSANPSQSQP), and 329–370 (LCPA…GSSS). Positions 329–338 (LCPASGSRSS) are enriched in low complexity. Residues Ser-564 and Ser-575 each carry the phosphoserine modification. The interval 583–763 (EFKPNYIKFH…KDLKFKLSKM (181 aa)) is interaction with cup. The region spanning 600-654 (GIGLWLKSLRLHKYIELFKNMTYEEMLLITEDFLQSVGVTKGASHKLALCIDKLK) is the SAM domain. Disordered stretches follow at residues 773–892 (HVKP…MQQM) and 942–977 (NNGSNDNLGLERNQQPQQQQQRKLSGGVSSAEQQPK). Polar residues-rich tracts occupy residues 801 to 822 (KSGSNDRINNRKNSNDMLNFSL) and 854 to 864 (HQPQYKSSSYP). Ser-971 carries the post-translational modification Phosphoserine.

The protein belongs to the SMAUG family. As to quaternary structure, interacts with oskar (osk). Binds to the 3'-UTR of nos. Interacts with cup, which in turn recruits eIF4-E, leading to an indirect interaction between smg and eIF4-E that prevents mRNA translation.

It localises to the cytoplasm. Translation regulator that binds to the 3'-UTR of specific mRNAs such as nanos (nos) and prevent their translation. Prevents translation of unlocalized nos in the bulk cytoplasm via the recruitment of cup. The chain is Protein Smaug from Drosophila simulans (Fruit fly).